The sequence spans 318 residues: Guanidinopropionase (318 aa).

Residues His-126, Asp-148, His-150, Asp-152, Asp-240, and Asp-242 each contribute to the Mn(2+) site.

The protein belongs to the arginase family. Agmatinase subfamily. As to quaternary structure, homohexamer. It depends on Mn(2+) as a cofactor.

The catalysed reaction is 3-guanidinopropanoate + H2O = urea + beta-alanine. Functionally, catalyzes the hydrolysis of 3-guanidinopropanoate to beta-alanine and urea. Possesses low activity against 4-guanidinobutanoate. Has no activity against arginine and agmatine. The polypeptide is Guanidinopropionase (gpuA) (Pseudomonas aeruginosa (strain ATCC 15692 / DSM 22644 / CIP 104116 / JCM 14847 / LMG 12228 / 1C / PRS 101 / PAO1)).